A 146-amino-acid polypeptide reads, in one-letter code: Hemoglobin subunit beta (146 aa).

Residues 2–146 (QWSAEEKQLI…VAHALARKYH (145 aa)) form the Globin domain. Residues histidine 63 and histidine 92 each contribute to the heme b site.

Belongs to the globin family. As to quaternary structure, heterotetramer of two alpha chains and two beta chains. Red blood cells.

Functionally, involved in oxygen transport from the lung to the various peripheral tissues. This is Hemoglobin subunit beta (HBB) from Struthio camelus (Common ostrich).